The primary structure comprises 377 residues: MKHNIINLAQDLIRRPSVSPDDQGCQQVIAERLAQLGFTLEWLPFGDTLNLWATHGTQDPCVVFAGHTDVVPVGDETQWQYPPFSAEIVDGTLYGRGAADMKGSLAALVIAAETFVKNNPNHKGKIALLITSDEEAAAKAGTVKVVETLMARQEAVHYAVVGEPSSGKVLGDVIKNGRRGSITGELYIEGVQGHVAYPHLAENPVHTSLNFLTELTTYQWDNGNEFFPPTSLQIANIKAGTGSNNVIPGELYVQFNLRYCTEVTDEIIKNKVAEMLAKHQLKHRISWNLSGQPFLAGNGELVKATVQAVENVTKITPRLDTSGGTSDGRFIALMGAEVVEFGPLNATIHKVNECVSVEDLGKCGEVYYHILERLLKS.

Position 67 (H67) interacts with Zn(2+). D69 is a catalytic residue. D100 lines the Zn(2+) pocket. E134 acts as the Proton acceptor in catalysis. Zn(2+) contacts are provided by E135, E163, and H349.

The protein belongs to the peptidase M20A family. DapE subfamily. In terms of assembly, homodimer. It depends on Zn(2+) as a cofactor. Co(2+) serves as cofactor.

The enzyme catalyses N-succinyl-(2S,6S)-2,6-diaminopimelate + H2O = (2S,6S)-2,6-diaminopimelate + succinate. The protein operates within amino-acid biosynthesis; L-lysine biosynthesis via DAP pathway; LL-2,6-diaminopimelate from (S)-tetrahydrodipicolinate (succinylase route): step 3/3. Catalyzes the hydrolysis of N-succinyl-L,L-diaminopimelic acid (SDAP), forming succinate and LL-2,6-diaminopimelate (DAP), an intermediate involved in the bacterial biosynthesis of lysine and meso-diaminopimelic acid, an essential component of bacterial cell walls. This is Succinyl-diaminopimelate desuccinylase from Actinobacillus pleuropneumoniae serotype 5b (strain L20).